The sequence spans 139 residues: Flagellar assembly factor FliW 2 (139 aa).

Belongs to the FliW family. Interacts with translational regulator CsrA and flagellin(s).

The protein localises to the cytoplasm. In terms of biological role, acts as an anti-CsrA protein, binds CsrA and prevents it from repressing translation of its target genes, one of which is flagellin. Binds to flagellin and participates in the assembly of the flagellum. This chain is Flagellar assembly factor FliW 2, found in Helicobacter hepaticus (strain ATCC 51449 / 3B1).